A 121-amino-acid polypeptide reads, in one-letter code: Small ribosomal subunit protein eS24 (121 aa).

The protein belongs to the eukaryotic ribosomal protein eS24 family.

This Pyrobaculum arsenaticum (strain DSM 13514 / JCM 11321 / PZ6) protein is Small ribosomal subunit protein eS24.